The sequence spans 1051 residues: Serine/threonine-protein kinase ULK1 (1051 aa).

Residues F16–L278 enclose the Protein kinase domain. ATP contacts are provided by residues I22–V30 and K46. D138 (proton acceptor) is an active-site residue. Residue K162 is modified to N6-acetyllysine. Disordered regions lie at residues P283–Q323, A335–V358, and G394–H554. The interaction with GABARAP and GABARAPL2 stretch occupies residues S287–G416. 3 stretches are compositionally biased toward low complexity: residues Y295 to L318, G340 to K349, and R400 to S423. S317 is subject to Phosphoserine; by AMPK. S403 and S450 each carry phosphoserine. Polar residues predominate over residues Q437–S459. Phosphothreonine is present on T456. Phosphoserine is present on residues S467, S477, S479, and S521. Position 555 is a phosphoserine; by AMPK (S555). Residue T574 is modified to Phosphothreonine. K606 is subject to N6-acetyllysine. T635 is subject to Phosphothreonine. The residue at position 637 (S637) is a Phosphoserine; by AMPK. S638 carries the post-translational modification Phosphoserine. 2 disordered regions span residues P661–G686 and A727–S787. Gly residues predominate over residues G731 to A745. S757 carries the post-translational modification Phosphoserine; by MTOR. A Phosphoserine modification is found at S774. Positions S774 to S787 are enriched in low complexity. S777 bears the Phosphoserine; by AMPK mark. Positions P829–A1051 are C-terminal domain; mediates interaction with SESN2.

It belongs to the protein kinase superfamily. Ser/Thr protein kinase family. APG1/unc-51/ULK1 subfamily. Interacts with GABARAP and GABARAPL2. Interacts (via C-terminus) with ATG13. Part of a complex consisting of ATG13, ATG101, ULK1 and RB1CC1. Associates with the mammalian target of rapamycin complex 1 (mTORC1) through an interaction with RPTOR; the association depends on nutrient conditions and is reduced during starvation. Interacts with FEZ1; SCOC interferes with FEZ1-binding. Interacts with TBC1D14. Interacts (phosphorylated form) with TRIM5. When phosphorylated at Ser-317, interacts with MEFV and BECN1 simultaneously. Interacts with TRIM21 and IRF3, in the presence of TRIM21. Interacts with SESN2. Interacts with SQSTM1. Interacts with C9orf72. Interacts with WDR45. Interacts with ATG13; this interaction is increased in the absence of TMEM39A. Interacts with WIPI2. Interacts with ATP2A2. Interacts with AMBRA1. Interacts with Irgm1; promoting the coassembly of ULK1 and BECN1. Post-translationally, autophosphorylated. Phosphorylated under nutrient-rich conditions; dephosphorylated during starvation or following treatment with rapamycin. In response to nutrient limitation, phosphorylated and activated by AMPK, leading to activate autophagy. Under nutrient sufficiency, phosphorylated by MTOR/mTOR, disrupting the interaction with AMPK and preventing activation of ULK1. In terms of processing, ubiquitinated via 'Lys-63'-linkage by a complex composed of AMBRA1 and TRAF6 following autophagy induction, promoting ULK1 stability and kinase activity. Deubiquitinated by USP20; leading to ULK1 stability and autophagy initiation. Acetylated by KAT5/TIP60 under autophagy induction, promoting protein kinase activity.

Its subcellular location is the cytoplasm. It localises to the cytosol. The protein resides in the preautophagosomal structure. The enzyme catalyses L-seryl-[protein] + ATP = O-phospho-L-seryl-[protein] + ADP + H(+). It catalyses the reaction L-threonyl-[protein] + ATP = O-phospho-L-threonyl-[protein] + ADP + H(+). Its activity is regulated as follows. Acetylation by KAT5/TIP60 stimulates the protein kinase activity. The protein kinase activity is activated by unanchored 'Lys-63'-linked polyubiquitin chains: unanchored 'Lys-63'-linked polyubiquitin chains are catalyzed by TRIM32 in an AMBRA1-dependent manner. Serine/threonine-protein kinase involved in autophagy in response to starvation. Acts upstream of phosphatidylinositol 3-kinase PIK3C3 to regulate the formation of autophagophores, the precursors of autophagosomes. Part of regulatory feedback loops in autophagy: acts both as a downstream effector and negative regulator of mammalian target of rapamycin complex 1 (mTORC1) via interaction with RPTOR. Activated via phosphorylation by AMPK and also acts as a regulator of AMPK by mediating phosphorylation of AMPK subunits PRKAA1, PRKAB2 and PRKAG1, leading to negatively regulate AMPK activity. May phosphorylate ATG13/KIAA0652 and RPTOR; however such data need additional evidences. Plays a role early in neuronal differentiation and is required for granule cell axon formation. Also phosphorylates SESN2 and SQSTM1 to regulate autophagy. Phosphorylates FLCN, promoting autophagy. Phosphorylates AMBRA1 in response to autophagy induction, releasing AMBRA1 from the cytoskeletal docking site to induce autophagosome nucleation. Phosphorylates ATG4B, leading to inhibit autophagy by decreasing both proteolytic activation and delipidation activities of ATG4B. This is Serine/threonine-protein kinase ULK1 (Ulk1) from Mus musculus (Mouse).